The chain runs to 125 residues: uncharacterized protein (125 aa).

A helical transmembrane segment spans residues 21–43 (KFSLIALVSFTALAIIVLYHNIS).

The protein localises to the membrane. This is an uncharacterized protein from Archaeoglobus fulgidus (strain ATCC 49558 / DSM 4304 / JCM 9628 / NBRC 100126 / VC-16).